We begin with the raw amino-acid sequence, 373 residues long: tRNA-specific 2-thiouridylase MnmA (373 aa).

ATP contacts are provided by residues 12 to 19 (GMSGGVDS) and methionine 38. Positions 98–100 (NPD) are interaction with target base in tRNA. Cysteine 103 acts as the Nucleophile in catalysis. Cysteine 103 and cysteine 200 are joined by a disulfide. An ATP-binding site is contributed by glycine 127. An interaction with tRNA region spans residues 150–152 (KDQ). Cysteine 200 acts as the Cysteine persulfide intermediate in catalysis. An interaction with tRNA region spans residues 312 to 313 (RY).

The protein belongs to the MnmA/TRMU family.

Its subcellular location is the cytoplasm. The enzyme catalyses S-sulfanyl-L-cysteinyl-[protein] + uridine(34) in tRNA + AH2 + ATP = 2-thiouridine(34) in tRNA + L-cysteinyl-[protein] + A + AMP + diphosphate + H(+). In terms of biological role, catalyzes the 2-thiolation of uridine at the wobble position (U34) of tRNA, leading to the formation of s(2)U34. This Streptococcus mutans serotype c (strain ATCC 700610 / UA159) protein is tRNA-specific 2-thiouridylase MnmA.